The chain runs to 130 residues: Small ribosomal subunit protein uS9 (130 aa).

A disordered region spans residues arginine 109–arginine 130. Basic residues predominate over residues lysine 111 to arginine 130.

Belongs to the universal ribosomal protein uS9 family.

The chain is Small ribosomal subunit protein uS9 from Clostridium kluyveri (strain NBRC 12016).